The following is a 381-amino-acid chain: Dual-specificity RNA methyltransferase RlmN (381 aa).

E96 (proton acceptor) is an active-site residue. The Radical SAM core domain maps to T102 to D342. A disulfide bridge links C109 with C345. The [4Fe-4S] cluster site is built by C116, C120, and C123. Residues G170–E171, S202, S224–H226, and N302 each bind S-adenosyl-L-methionine. C345 functions as the S-methylcysteine intermediate in the catalytic mechanism.

The protein belongs to the radical SAM superfamily. RlmN family. [4Fe-4S] cluster serves as cofactor.

The protein resides in the cytoplasm. The catalysed reaction is adenosine(2503) in 23S rRNA + 2 reduced [2Fe-2S]-[ferredoxin] + 2 S-adenosyl-L-methionine = 2-methyladenosine(2503) in 23S rRNA + 5'-deoxyadenosine + L-methionine + 2 oxidized [2Fe-2S]-[ferredoxin] + S-adenosyl-L-homocysteine. It catalyses the reaction adenosine(37) in tRNA + 2 reduced [2Fe-2S]-[ferredoxin] + 2 S-adenosyl-L-methionine = 2-methyladenosine(37) in tRNA + 5'-deoxyadenosine + L-methionine + 2 oxidized [2Fe-2S]-[ferredoxin] + S-adenosyl-L-homocysteine. Functionally, specifically methylates position 2 of adenine 2503 in 23S rRNA and position 2 of adenine 37 in tRNAs. m2A2503 modification seems to play a crucial role in the proofreading step occurring at the peptidyl transferase center and thus would serve to optimize ribosomal fidelity. This Pseudomonas putida (strain GB-1) protein is Dual-specificity RNA methyltransferase RlmN.